The following is a 358-amino-acid chain: PqqA peptide cyclase (358 aa).

Residues 4–219 enclose the Radical SAM core domain; the sequence is PSPPMSLLAE…VEAERAKGGL (216 aa). Positions 18, 22, and 25 each coordinate [4Fe-4S] cluster.

This sequence belongs to the radical SAM superfamily. PqqE family. Interacts with PqqD. The interaction is necessary for activity of PqqE. Requires [4Fe-4S] cluster as cofactor.

The catalysed reaction is [PQQ precursor protein] + S-adenosyl-L-methionine = E-Y cross-linked-[PQQ precursor protein] + 5'-deoxyadenosine + L-methionine + H(+). Its pathway is cofactor biosynthesis; pyrroloquinoline quinone biosynthesis. Functionally, catalyzes the cross-linking of a glutamate residue and a tyrosine residue in the PqqA protein as part of the biosynthesis of pyrroloquinoline quinone (PQQ). The sequence is that of PqqA peptide cyclase from Gluconobacter oxydans (strain 621H) (Gluconobacter suboxydans).